The chain runs to 438 residues: Glycerophosphocholine cholinephosphodiesterase ENPP6 (438 aa).

The signal sequence occupies residues 1 to 22 (MTRTLLKIYTLFILLLCRQRDA). D32, S69, and N90 together coordinate substrate. Zn(2+) is bound by residues D32 and S69. The active-site Nucleophile is S69. Position 69 is a phosphoserine (S69). Cysteines 140 and 152 form a disulfide. A coiled-coil region spans residues 162–226 (KNLTDSMENA…ILNQKIREKN (65 aa)). A glycan (N-linked (GlcNAc...) asparagine) is linked at N163. Residue D191 participates in substrate binding. 4 residues coordinate Zn(2+): D191, H195, D238, and H239. H239 provides a ligand contact to substrate. Residues N258, N287, and N339 are each glycosylated (N-linked (GlcNAc...) asparagine). Residue H352 participates in substrate binding. H352 provides a ligand contact to Zn(2+). N402 is a glycosylation site (N-linked (GlcNAc...) asparagine). Residue S415 is the site of GPI-anchor amidated serine attachment. Positions 416–438 (AATAGASLISCCFLLLLTLTGVC) are cleaved as a propeptide — removed in mature form.

This sequence belongs to the nucleotide pyrophosphatase/phosphodiesterase family. Zn(2+) serves as cofactor.

It localises to the cell membrane. It carries out the reaction sn-glycerol 3-phosphocholine + H2O = phosphocholine + glycerol + H(+). It catalyses the reaction a 1-acyl-sn-glycero-3-phosphocholine + H2O = a 1-acyl-sn-glycerol + phosphocholine + H(+). The enzyme catalyses a 1-O-alkyl-sn-glycero-3-phosphocholine + H2O = a 1-O-alkyl-sn-glycerol + phosphocholine + H(+). The catalysed reaction is 1-dodecanoyl-sn-glycero-3-phosphocholine + H2O = 1-dodecanoyl-sn-glycerol + phosphocholine + H(+). It carries out the reaction 1-hexadecanoyl-sn-glycero-3-phosphocholine + H2O = 1-hexadecanoyl-sn-glycerol + phosphocholine + H(+). It catalyses the reaction 1-(5Z,8Z,11Z,14Z-eicosatetraenoyl)-sn-glycero-3-phosphocholine + H2O = 1-(5Z,8Z,11Z,14Z-eicosatetraenoyl)-sn-glycerol + phosphocholine + H(+). The enzyme catalyses 1-tetradecanoyl-sn-glycero-3-phosphocholine + H2O = 1-tetradecanoyl-sn-glycerol + phosphocholine + H(+). The catalysed reaction is sphing-4-enine-phosphocholine + H2O = sphing-4-enine + phosphocholine + H(+). It carries out the reaction 1-(9Z-octadecenoyl)-sn-glycero-3-phosphocholine + H2O = 1-(9Z-octadecenoyl)-sn-glycerol + phosphocholine + H(+). It catalyses the reaction 1-(9Z,12Z)-octadecadienoyl-sn-glycero-3-phosphocholine + H2O = 1-(9Z,12Z-octadecadienoyl)-sn-glycerol + phosphocholine + H(+). The enzyme catalyses glycero-2-phosphocholine + H2O = phosphocholine + glycerol + H(+). Choline-specific glycerophosphodiesterase that hydrolyzes glycerophosphocholine (GPC) and lysophosphatidylcholine (LPC) and contributes to supplying choline to the cells. Has a preference for LPC with short (12:0 and 14:0) or polyunsaturated (18:2 and 20:4) fatty acids. In vitro, hydrolyzes only choline-containing lysophospholipids, such as sphingosylphosphorylcholine (SPC), platelet-activating factor (PAF) and lysoPAF, but not other lysophospholipids. The polypeptide is Glycerophosphocholine cholinephosphodiesterase ENPP6 (Danio rerio (Zebrafish)).